Reading from the N-terminus, the 442-residue chain is MSSRDFSNDLFSINIEENAGCVVSAKVQANPLVTQKCHKEALKTVKKNVVLPGFRKGKAPDNIVESRYSTQMEQELRRLFLRASFEALSQMCDRKPLSPKAVRSSAIDTCNPVNGGSVSFLYEAFPVIPSLPWEQLSLPDPEPVKEISEEDLENGLKNVAYFFATKTPVTRPSQEGDFISLSLYVSKRGDENSTPVAIFENKYFKISEEDMTDSFKARFLNVSTGHRVEEEIGSEDIQSFLNGDLLTFTVNAVIEISSPEMDDEKARQLQAESLEDLKKKLRIQLENQAKEAQHQKRFSDAEDALAQLIDFDLPESLLQEREELLSREKLLNARLVKYCSDSELEEQKQALLEEAKADARKAVKLLFLTQKVFSEKGLSISREELQYMMDVCSRERFGGYPPKDISNEMIQELVLVARDRLTYRKAIEAISSEKKDLEVVPS.

One can recognise a PPIase FKBP-type domain in the interval 176–259 (GDFISLSLYV…VNAVIEISSP (84 aa)).

It belongs to the FKBP-type PPIase family. Tig subfamily.

Its subcellular location is the cytoplasm. It catalyses the reaction [protein]-peptidylproline (omega=180) = [protein]-peptidylproline (omega=0). Functionally, involved in protein export. Acts as a chaperone by maintaining the newly synthesized protein in an open conformation. Functions as a peptidyl-prolyl cis-trans isomerase. The protein is Trigger factor (tig) of Chlamydia trachomatis serovar D (strain ATCC VR-885 / DSM 19411 / UW-3/Cx).